The chain runs to 644 residues: Exoribonuclease 2 (644 aa).

Residues 189–516 enclose the RNB domain; that stretch reads REDLTALDFV…NHRLLKAVIK (328 aa). An S1 motif domain is found at 561 to 643; that stretch reads DTRFAAEIVD…ETRSIIARPV (83 aa).

The protein belongs to the RNR ribonuclease family. RNase II subfamily.

It is found in the cytoplasm. The enzyme catalyses Exonucleolytic cleavage in the 3'- to 5'-direction to yield nucleoside 5'-phosphates.. Its function is as follows. Involved in mRNA degradation. Hydrolyzes single-stranded polyribonucleotides processively in the 3' to 5' direction. This is Exoribonuclease 2 from Escherichia coli O17:K52:H18 (strain UMN026 / ExPEC).